A 330-amino-acid polypeptide reads, in one-letter code: MTATQPVHLVRPAPVHVHPSSERWSVEAIEALFALPFNDLIFRAQQVHREHFDANAVQRSTLLSIKTGGCPEDCAYCPQSVHHDTGVEADKLMDVATVRQAAQAAAAAGATRFCMGAAWREPKDRDIEKVVELVREVKSLGLEACCTLGMLSKPQAQALKEAGVDYYNHNLDTAPEAYGRIISTRVYEERLQTLAHVRDAGMNVCCGGIVGMGESRRERAGLVAQLANLDPHPESVPINELVQVEGTPLAGSDKLDPFEFVRTIAVARITMPTAYVRLSAGRQEMGDAIQALCFLAGANSIFYGDKLLTTGNPDVERDEALFERLGLTSA.

Residues 55–282 (NAVQRSTLLS…TAYVRLSAGR (228 aa)) enclose the Radical SAM core domain. The [4Fe-4S] cluster site is built by C70, C74, and C77. [2Fe-2S] cluster is bound by residues C114, C145, C205, and R277.

Belongs to the radical SAM superfamily. Biotin synthase family. In terms of assembly, homodimer. [4Fe-4S] cluster serves as cofactor. The cofactor is [2Fe-2S] cluster.

It carries out the reaction (4R,5S)-dethiobiotin + (sulfur carrier)-SH + 2 reduced [2Fe-2S]-[ferredoxin] + 2 S-adenosyl-L-methionine = (sulfur carrier)-H + biotin + 2 5'-deoxyadenosine + 2 L-methionine + 2 oxidized [2Fe-2S]-[ferredoxin]. The protein operates within cofactor biosynthesis; biotin biosynthesis; biotin from 7,8-diaminononanoate: step 2/2. Functionally, catalyzes the conversion of dethiobiotin (DTB) to biotin by the insertion of a sulfur atom into dethiobiotin via a radical-based mechanism. The polypeptide is Biotin synthase (Methylibium petroleiphilum (strain ATCC BAA-1232 / LMG 22953 / PM1)).